We begin with the raw amino-acid sequence, 112 residues long: UPF0235 protein Atu2660 (112 aa).

The protein belongs to the UPF0235 family.

In Agrobacterium fabrum (strain C58 / ATCC 33970) (Agrobacterium tumefaciens (strain C58)), this protein is UPF0235 protein Atu2660.